The following is a 296-amino-acid chain: 4-hydroxy-tetrahydrodipicolinate synthase (296 aa).

Residue T49 coordinates pyruvate. Y137 serves as the catalytic Proton donor/acceptor. The Schiff-base intermediate with substrate role is filled by K166. I208 contributes to the pyruvate binding site.

Belongs to the DapA family. In terms of assembly, homotetramer; dimer of dimers.

The protein localises to the cytoplasm. It carries out the reaction L-aspartate 4-semialdehyde + pyruvate = (2S,4S)-4-hydroxy-2,3,4,5-tetrahydrodipicolinate + H2O + H(+). It functions in the pathway amino-acid biosynthesis; L-lysine biosynthesis via DAP pathway; (S)-tetrahydrodipicolinate from L-aspartate: step 3/4. Catalyzes the condensation of (S)-aspartate-beta-semialdehyde [(S)-ASA] and pyruvate to 4-hydroxy-tetrahydrodipicolinate (HTPA). The protein is 4-hydroxy-tetrahydrodipicolinate synthase of Pelodictyon phaeoclathratiforme (strain DSM 5477 / BU-1).